Here is a 555-residue protein sequence, read N- to C-terminus: Urocanate hydratase (555 aa).

NAD(+)-binding positions include 51–52 (GG), Gln-129, 175–177 (GMG), Glu-195, 241–242 (NA), 262–266 (QTSAH), 272–273 (YL), and Tyr-321. Residue Cys-409 is part of the active site. Gly-491 is a binding site for NAD(+).

Belongs to the urocanase family. NAD(+) is required as a cofactor.

It is found in the cytoplasm. It carries out the reaction 4-imidazolone-5-propanoate = trans-urocanate + H2O. It participates in amino-acid degradation; L-histidine degradation into L-glutamate; N-formimidoyl-L-glutamate from L-histidine: step 2/3. In terms of biological role, catalyzes the conversion of urocanate to 4-imidazolone-5-propionate. The sequence is that of Urocanate hydratase from Hyphomonas neptunium (strain ATCC 15444).